The following is a 325-amino-acid chain: Probable tRNA-dihydrouridine synthase 2 (325 aa).

18-20 serves as a coordination point for FMN; sequence PME. Cysteine 105 functions as the Proton donor in the catalytic mechanism. Residues lysine 143, 208–210, and 232–233 contribute to the FMN site; these read NGD and GR.

It belongs to the Dus family. Requires FMN as cofactor.

It carries out the reaction a 5,6-dihydrouridine in tRNA + NAD(+) = a uridine in tRNA + NADH + H(+). The enzyme catalyses a 5,6-dihydrouridine in tRNA + NADP(+) = a uridine in tRNA + NADPH + H(+). Catalyzes the synthesis of 5,6-dihydrouridine (D), a modified base found in the D-loop of most tRNAs, via the reduction of the C5-C6 double bond in target uridines. This chain is Probable tRNA-dihydrouridine synthase 2 (dus2), found in Bacillus subtilis (strain 168).